The following is a 413-amino-acid chain: Peptidase T (413 aa).

Zn(2+) is bound at residue histidine 84. Residue aspartate 86 is part of the active site. Aspartate 147 contacts Zn(2+). Glutamate 181 serves as the catalytic Proton acceptor. Zn(2+)-binding residues include glutamate 182, aspartate 204, and histidine 386.

Belongs to the peptidase M20B family. Requires Zn(2+) as cofactor.

The protein resides in the cytoplasm. It carries out the reaction Release of the N-terminal residue from a tripeptide.. Its function is as follows. Cleaves the N-terminal amino acid of tripeptides. The chain is Peptidase T from Ligilactobacillus salivarius (strain UCC118) (Lactobacillus salivarius).